Here is a 177-residue protein sequence, read N- to C-terminus: Large ribosomal subunit protein uL6 (177 aa).

It belongs to the universal ribosomal protein uL6 family. In terms of assembly, part of the 50S ribosomal subunit.

Functionally, this protein binds to the 23S rRNA, and is important in its secondary structure. It is located near the subunit interface in the base of the L7/L12 stalk, and near the tRNA binding site of the peptidyltransferase center. This chain is Large ribosomal subunit protein uL6, found in Pseudomonas putida (strain ATCC 700007 / DSM 6899 / JCM 31910 / BCRC 17059 / LMG 24140 / F1).